A 96-amino-acid polypeptide reads, in one-letter code: Co-chaperonin GroES (96 aa).

This sequence belongs to the GroES chaperonin family. Heptamer of 7 subunits arranged in a ring. Interacts with the chaperonin GroEL.

It localises to the cytoplasm. Together with the chaperonin GroEL, plays an essential role in assisting protein folding. The GroEL-GroES system forms a nano-cage that allows encapsulation of the non-native substrate proteins and provides a physical environment optimized to promote and accelerate protein folding. GroES binds to the apical surface of the GroEL ring, thereby capping the opening of the GroEL channel. The protein is Co-chaperonin GroES of Haemophilus influenzae (strain PittEE).